The sequence spans 582 residues: Hemagglutinin-neuraminidase (582 aa).

The helical transmembrane segment at 35-55 (ILVLSVQAVTLILVIVNLGEL) threads the bilayer. Disulfide bonds link C178–C202, C192–C253, and C244–C257. N-linked (GlcNAc...) asparagine; by host glycosylation is found at N284 and N329. 3 cysteine pairs are disulfide-bonded: C350–C471, C382–C392, and C465–C475. N-linked (GlcNAc...) asparagine; by host glycans are attached at residues N400 and N448. A glycan (N-linked (GlcNAc...) asparagine; by host) is linked at N507. Cysteines 545 and 556 form a disulfide.

Belongs to the paramyxoviruses hemagglutinin-neuraminidase family. As to quaternary structure, homotetramer; composed of disulfide-linked homodimers. Interacts with F protein trimer.

It localises to the virion membrane. It is found in the host cell membrane. It catalyses the reaction Hydrolysis of alpha-(2-&gt;3)-, alpha-(2-&gt;6)-, alpha-(2-&gt;8)- glycosidic linkages of terminal sialic acid residues in oligosaccharides, glycoproteins, glycolipids, colominic acid and synthetic substrates.. Attaches the virus to alpha-2,3-linked sialic acid-containing cell receptors and thereby initiating infection. Binding of HN protein to the receptor induces a conformational change that allows the F protein to trigger virion/cell membranes fusion. Binds to the glycan motifs sialyl Lewis (SLe) and GM2 ganglioside (GM2-glycan). In terms of biological role, neuraminidase activity ensures the efficient spread of the virus by dissociating the mature virions from the neuraminic acid containing glycoproteins. The sequence is that of Hemagglutinin-neuraminidase (HN) from Homo sapiens (Human).